The following is a 4017-amino-acid chain: Hybrid PKS-NRPS synthetase cghG (4017 aa).

A Ketosynthase family 3 (KS3) domain is found at 6-438 (QEPIAVIGMA…GTNAHAIIES (433 aa)). Residues Cys-179, His-318, and His-358 each act as for beta-ketoacyl synthase activity in the active site. Residues 549–869 (VFTGQGAQWP…GRNKNDVVEL (321 aa)) are malonyl-CoA:ACP transacylase (MAT) domain. Positions 936–1072 (NPILGRRCVE…ATLHVRFHEP (137 aa)) are N-terminal hotdog fold. In terms of domain architecture, PKS/mFAS DH spans 936 to 1243 (NPILGRRCVE…VKPFAAATAR (308 aa)). Positions 937 to 1240 (PILGRRCVET…AVQVKPFAAA (304 aa)) are dehydratase (DH) domain. The Proton acceptor; for dehydratase activity role is filled by His-969. The segment at 1087–1243 (LVKTDPGRLY…VKPFAAATAR (157 aa)) is C-terminal hotdog fold. The Proton donor; for dehydratase activity role is filled by Asp-1147. The segment at 1398–1585 (VANVWIARMV…GVDTHCPVEK (188 aa)) is methyltransferase (MT) domain. A ketoreductase (KR)domain region spans residues 2127–2300 (TYFLVGLSGE…XXXXXXXXXX (174 aa)). The Carrier 1 domain occupies 2423–2499 (AVVQDSLTEN…SLAEEAMAKI (77 aa)). At Ser-2458 the chain carries O-(pantetheine 4'-phosphoryl)serine. 2 disordered regions span residues 2547-2606 (VSEA…LQHR) and 2613-2632 (WAGS…AQRH). A compositionally biased stretch (polar residues) spans 2548–2578 (SEASGVSATTPSTRAETDASSSPALVSTPGT). The segment at 2626–3020 (RRAAQRHETL…GDAMETEKLQ (395 aa)) is condensation. The adenylation stretch occupies residues 3053 to 3453 (EVIAQNPTAV…SGFLAIEGRI (401 aa)). The disordered stretch occupies residues 3567 to 3586 (PKTTTASTTADGTQPAQPLT). The segment covering 3569-3579 (TTTASTTADGT) has biased composition (low complexity). Residues 3583–3661 (QPLTPTESRL…SMAALLDQAG (79 aa)) form the Carrier 2 domain. The interval 3588 to 3658 (TESRLATLWA…ELGSMAALLD (71 aa)) is thiolation. Ser-3621 bears the O-(pantetheine 4'-phosphoryl)serine mark. The segment at 3696 to 3920 (VTGASGSLGK…DVGRLEDVAA (225 aa)) is reductase-like.

The protein in the C-terminal section; belongs to the NRP synthetase family.

It catalyses the reaction (2S,4S)-4-hydroxy-4-methylglutamate + 8 malonyl-CoA + 3 S-adenosyl-L-methionine + ATP + 8 NADPH + 11 H(+) = (2S)-3-[(2S)-3,5-dioxo-4-[(2E,4R,6R,8E,10E,12E)-4,6,12-trimethyltetradeca-2,8,10,12-tetraenoyl]pyrrolidin-2-yl]-2-hydroxy-2-methylpropanoate + AMP + 3 S-adenosyl-L-homocysteine + 8 CO2 + diphosphate + 8 NADP(+) + 8 CoA + 6 H2O. It participates in secondary metabolite biosynthesis. Functionally, hybrid PKS-NRPS synthetase; part of the gene cluster that mediates the biosynthesis of the tetramic acid Sch210972, a potential anti-HIV fungal natural product that contains a decalin core. The PKS module of cghG together with the enoylreductase cghC catalyze the formation of the polyketide unit which is then conjugated to 4-hydroxyl-4-methyl glutamate (HMG) by the condensation domain of the cghG NRPS module. One unique structural feature of Sch210972 is the tetramic acid motif proposed to be derived from the non-proteinogenic amino acid HMG, by a Dieckmann-type condensation catalyzed by the reductase domain of cghG. The aldolase cghB catalyzes the aldol condensation of 2 molecules of pyruvic acid to yield the intermediate 4-hydroxyl-4-methyl-2-oxoglutarate (HMOG), which can then be stereoselectively transaminated by an unidentified enzyme to form HMG. The Diels-Alderase cghA then uses the Dieckmann product released by cghG as substrate and catalyzes the Diels-Alder cycloaddition to form the decalin ring of Sch210972. CghA also suppresses the nonenzymatic formation of the alternative stereoisomer. This chain is Hybrid PKS-NRPS synthetase cghG, found in Chaetomium globosum (strain ATCC 6205 / CBS 148.51 / DSM 1962 / NBRC 6347 / NRRL 1970) (Soil fungus).